Here is a 429-residue protein sequence, read N- to C-terminus: Transcription factor IIIA (429 aa).

Residues methionine 1–arginine 45 form a disordered region. Residues serine 24–asparagine 44 are compositionally biased toward low complexity. 9 consecutive C2H2-type zinc fingers follow at residues tyrosine 49–histidine 74, phenylalanine 80–histidine 102, phenylalanine 108–histidine 130, phenylalanine 134–histidine 159, leucine 163–histidine 186, tyrosine 194–histidine 219, leucine 222–histidine 244, tryptophan 253–histidine 277, and tyrosine 365–histidine 389. Over residues lysine 406–proline 416 the composition is skewed to basic and acidic residues. A disordered region spans residues lysine 406–lysine 429.

The protein resides in the nucleus. Its function is as follows. Interacts with the internal control region (ICR) of approximately 50 bases within the 5S RNA genes, is required for correct transcription of these genes by RNA polymerase III. Also binds the transcribed 5S RNA's. This is Transcription factor IIIA (PZF1) from Saccharomyces cerevisiae (strain ATCC 204508 / S288c) (Baker's yeast).